The sequence spans 160 residues: MTEDLKNTSPSKEESNEIEESSKATPKATRETKPKDSPSKTKLSAQALIAQFEKSQQKKKVPEVYVGDTVRVGVRISEGNKERVQPYEGVIIAKRHGGLNQTITVRRIFQGVGVERVFMVHSPQVASIKVERRGKVRRAKLFYLRDRVGKATRVKQRFDR.

Basic and acidic residues-rich tracts occupy residues 1–15 (MTEDLKNTSPSKEES) and 28–39 (ATRETKPKDSPS). Residues 1–44 (MTEDLKNTSPSKEESNEIEESSKATPKATRETKPKDSPSKTKLS) form a disordered region.

The protein belongs to the bacterial ribosomal protein bL19 family.

Its function is as follows. This protein is located at the 30S-50S ribosomal subunit interface and may play a role in the structure and function of the aminoacyl-tRNA binding site. The chain is Large ribosomal subunit protein bL19 from Prochlorococcus marinus (strain SARG / CCMP1375 / SS120).